The primary structure comprises 176 residues: Lipoprotein signal peptidase (176 aa).

The next 4 helical transmembrane spans lie at 11-31 (AFVA…LDQL), 38-58 (ATMQ…VLVF), 76-96 (WFFT…MHQH), and 101-121 (LLPA…VDRL). Residues D128 and D146 contribute to the active site. A helical membrane pass occupies residues 139–159 (WPAFNLADSAITLGVGLMLWA).

It belongs to the peptidase A8 family.

The protein localises to the cell inner membrane. The enzyme catalyses Release of signal peptides from bacterial membrane prolipoproteins. Hydrolyzes -Xaa-Yaa-Zaa-|-(S,diacylglyceryl)Cys-, in which Xaa is hydrophobic (preferably Leu), and Yaa (Ala or Ser) and Zaa (Gly or Ala) have small, neutral side chains.. It functions in the pathway protein modification; lipoprotein biosynthesis (signal peptide cleavage). Its function is as follows. This protein specifically catalyzes the removal of signal peptides from prolipoproteins. The protein is Lipoprotein signal peptidase of Azoarcus sp. (strain BH72).